We begin with the raw amino-acid sequence, 597 residues long: Probable HECT-type ubiquitin ligase-interacting protein creD (597 aa).

2 disordered regions span residues 375–398 (ELDP…GTLS) and 432–499 (LNIT…MATP). Residues 443–455 (TDHESQNDSEHRR) are compositionally biased toward basic and acidic residues. Over residues 465-481 (PSSGSNSHSPSSPVLSR) the composition is skewed to low complexity. Basic and acidic residues predominate over residues 482-492 (RPSDEVDHEHV).

This sequence belongs to the arrestin family. As to quaternary structure, interacts with hulA.

Its function is as follows. Component of the regulatory network controlling carbon source utilization through ubiquitination and deubiquitination involving creA, creB, creC, creD and acrB. May be involved in signaling by recognizing appropriately phosphorylated substrates via its arrestin domains and then recruit a HECT-type ubiquitin ligase such as hulA, leading to ubiquitination of the substrate, providing a link between ubiquitination and phosphorylation in protein regulation and stability. In Aspergillus oryzae (strain ATCC 42149 / RIB 40) (Yellow koji mold), this protein is Probable HECT-type ubiquitin ligase-interacting protein creD (creD).